A 149-amino-acid chain; its full sequence is Probable ubiquitin-conjugating enzyme E2 W (149 aa).

A UBC core domain is found at Arg4 to Val149. The active-site Glycyl thioester intermediate is Cys88.

The protein belongs to the ubiquitin-conjugating enzyme family.

It catalyses the reaction S-ubiquitinyl-[E1 ubiquitin-activating enzyme]-L-cysteine + [E2 ubiquitin-conjugating enzyme]-L-cysteine = [E1 ubiquitin-activating enzyme]-L-cysteine + S-ubiquitinyl-[E2 ubiquitin-conjugating enzyme]-L-cysteine.. It carries out the reaction S-ubiquitinyl-[E1 ubiquitin-activating enzyme]-L-cysteine + [acceptor protein]-N-terminal-amino acid = [E1 ubiquitin-activating enzyme]-L-cysteine + N-terminal-ubiquitinyl-[acceptor protein].. The protein operates within protein modification; protein ubiquitination. Functionally, catalyzes the covalent attachment of ubiquitin to other proteins. This is Probable ubiquitin-conjugating enzyme E2 W (ube2w) from Dictyostelium discoideum (Social amoeba).